A 20-amino-acid polypeptide reads, in one-letter code: Major extrapallial fluid protein (20 aa).

Positions 1–20 (NPVDDHHDDHHDAPIVEHHD) are disordered.

In terms of assembly, homodimer. Glycosylated.

Appears to be a building block of the soluble organic matrix of the shell. The protein binds calcium. This Mytilus edulis (Blue mussel) protein is Major extrapallial fluid protein.